The sequence spans 80 residues: Small ribosomal subunit protein bS16 (80 aa).

This sequence belongs to the bacterial ribosomal protein bS16 family.

The protein is Small ribosomal subunit protein bS16 of Nitrosococcus oceani (strain ATCC 19707 / BCRC 17464 / JCM 30415 / NCIMB 11848 / C-107).